The following is a 751-amino-acid chain: Lysine decarboxylase LdcA (751 aa).

The protein belongs to the Orn/Lys/Arg decarboxylase class-I family. As to quaternary structure, homodecamer.

The enzyme catalyses L-lysine + H(+) = cadaverine + CO2. Functionally, plays an essential role in lysine utilization by acting as a lysine decarboxylase. This Pseudomonas aeruginosa (strain ATCC 15692 / DSM 22644 / CIP 104116 / JCM 14847 / LMG 12228 / 1C / PRS 101 / PAO1) protein is Lysine decarboxylase LdcA.